Here is a 136-residue protein sequence, read N- to C-terminus: S-protein homolog 25 (136 aa).

Positions 1-20 (MNHSVFVILITITYFGLNQA) are cleaved as a signal peptide. N-linked (GlcNAc...) asparagine glycosylation is found at asparagine 71 and asparagine 84.

Belongs to the plant self-incompatibility (S1) protein family.

Its subcellular location is the secreted. The polypeptide is S-protein homolog 25 (Arabidopsis thaliana (Mouse-ear cress)).